Consider the following 313-residue polypeptide: Formimidoylglutamase (313 aa).

Mn(2+)-binding residues include H130, D155, H157, D159, D241, and D243.

The protein belongs to the arginase family. Mn(2+) is required as a cofactor.

The catalysed reaction is N-formimidoyl-L-glutamate + H2O = formamide + L-glutamate. It participates in amino-acid degradation; L-histidine degradation into L-glutamate; L-glutamate from N-formimidoyl-L-glutamate (hydrolase route): step 1/1. Its function is as follows. Catalyzes the conversion of N-formimidoyl-L-glutamate to L-glutamate and formamide. This is Formimidoylglutamase from Salmonella newport (strain SL254).